Here is a 180-residue protein sequence, read N- to C-terminus: Inner membrane-spanning protein YciB (180 aa).

Helical transmembrane passes span 4–24 (LLSE…GGGI), 25–45 (QSAT…CYII), 49–69 (VSKL…ITLI), 76–96 (IKIK…MSGI), 118–138 (IILS…NEVV), and 150–170 (FKVF…LPLL).

It belongs to the YciB family.

It is found in the cell inner membrane. In terms of biological role, plays a role in cell envelope biogenesis, maintenance of cell envelope integrity and membrane homeostasis. The sequence is that of Inner membrane-spanning protein YciB from Rickettsia typhi (strain ATCC VR-144 / Wilmington).